We begin with the raw amino-acid sequence, 316 residues long: Transaldolase (316 aa).

The active-site Schiff-base intermediate with substrate is the lysine 132.

This sequence belongs to the transaldolase family. Type 1 subfamily. As to quaternary structure, homodimer.

The protein localises to the cytoplasm. It catalyses the reaction D-sedoheptulose 7-phosphate + D-glyceraldehyde 3-phosphate = D-erythrose 4-phosphate + beta-D-fructose 6-phosphate. It participates in carbohydrate degradation; pentose phosphate pathway; D-glyceraldehyde 3-phosphate and beta-D-fructose 6-phosphate from D-ribose 5-phosphate and D-xylulose 5-phosphate (non-oxidative stage): step 2/3. Transaldolase is important for the balance of metabolites in the pentose-phosphate pathway. This Aliivibrio fischeri (strain ATCC 700601 / ES114) (Vibrio fischeri) protein is Transaldolase.